We begin with the raw amino-acid sequence, 832 residues long: Protein P (832 aa).

Residues 1 to 177 (MPLSYQHFRR…FCGSPYSWEQ (177 aa)) form a terminal protein domain (TP) region. A spacer region spans residues 178 to 335 (ELQHGAESFH…YCLSHIVNLL (158 aa)). Positions 241-263 (RRPFGVEPSGSGHTTNLASKSAS) are disordered. A compositionally biased stretch (polar residues) spans 251–263 (SGHTTNLASKSAS). A polymerase/reverse transcriptase domain (RT) region spans residues 336–679 (EDWGPCAEHG…YLNLYPVARQ (344 aa)). The Reverse transcriptase domain maps to 346–589 (EHHIRIPRTP…YSLHFMGYVI (244 aa)). Mg(2+) is bound by residues aspartate 418, aspartate 540, and aspartate 541.

Belongs to the hepadnaviridae P protein family.

It catalyses the reaction DNA(n) + a 2'-deoxyribonucleoside 5'-triphosphate = DNA(n+1) + diphosphate. It carries out the reaction Endonucleolytic cleavage to 5'-phosphomonoester.. Activated by host HSP70 and HSP40 in vitro to be able to bind the epsilon loop of the pgRNA. Because deletion of the RNase H region renders the protein partly chaperone-independent, the chaperones may be needed indirectly to relieve occlusion of the RNA-binding site by this domain. Inhibited by several reverse-transcriptase inhibitors: Lamivudine, Adefovir and Entecavir. Functionally, multifunctional enzyme that converts the viral RNA genome into dsDNA in viral cytoplasmic capsids. This enzyme displays a DNA polymerase activity that can copy either DNA or RNA templates, and a ribonuclease H (RNase H) activity that cleaves the RNA strand of RNA-DNA heteroduplexes in a partially processive 3'- to 5'-endonucleasic mode. Neo-synthesized pregenomic RNA (pgRNA) are encapsidated together with the P protein, and reverse-transcribed inside the nucleocapsid. Initiation of reverse-transcription occurs first by binding the epsilon loop on the pgRNA genome, and is initiated by protein priming, thereby the 5'-end of (-)DNA is covalently linked to P protein. Partial (+)DNA is synthesized from the (-)DNA template and generates the relaxed circular DNA (RC-DNA) genome. After budding and infection, the RC-DNA migrates in the nucleus, and is converted into a plasmid-like covalently closed circular DNA (cccDNA). The activity of P protein does not seem to be necessary for cccDNA generation, and is presumably released from (+)DNA by host nuclear DNA repair machinery. In Homo sapiens (Human), this protein is Protein P.